Here is a 463-residue protein sequence, read N- to C-terminus: Lactaldehyde dehydrogenase (463 aa).

220–225 (GSSKVG) is a binding site for NAD(+). Active-site residues include Glu240 and Cys274.

Belongs to the aldehyde dehydrogenase family. In terms of assembly, homotetramer.

It carries out the reaction (S)-lactaldehyde + NAD(+) + H2O = (S)-lactate + NADH + 2 H(+). It functions in the pathway cofactor biosynthesis; coenzyme F420 biosynthesis. Its function is as follows. Involved in F420 biosynthesis through the oxidation of lactaldehyde to lactate. The substrate preference order is propionaldehyde &gt; DL-lactaldehyde, DL-glyceraldehyde &gt; crotonaldehyde &gt; glycolaldehyde &gt; acetaldehyde, acrolein &gt; formaldehyde. No activity was observed towards methylglyoxal or glyceraldehyde-3-phosphate. Has a preference for NAD over NADP. The sequence is that of Lactaldehyde dehydrogenase from Methanocaldococcus jannaschii (strain ATCC 43067 / DSM 2661 / JAL-1 / JCM 10045 / NBRC 100440) (Methanococcus jannaschii).